A 220-amino-acid chain; its full sequence is tRNA (guanine-N(7)-)-methyltransferase (220 aa).

E46, D71, D100, and D122 together coordinate S-adenosyl-L-methionine. Residue D122 is part of the active site. Substrate contacts are provided by residues K126, D158, and 196-199 (TEYE).

It belongs to the class I-like SAM-binding methyltransferase superfamily. TrmB family.

It catalyses the reaction guanosine(46) in tRNA + S-adenosyl-L-methionine = N(7)-methylguanosine(46) in tRNA + S-adenosyl-L-homocysteine. It participates in tRNA modification; N(7)-methylguanine-tRNA biosynthesis. Its function is as follows. Catalyzes the formation of N(7)-methylguanine at position 46 (m7G46) in tRNA. This chain is tRNA (guanine-N(7)-)-methyltransferase, found in Malacoplasma penetrans (strain HF-2) (Mycoplasma penetrans).